Reading from the N-terminus, the 178-residue chain is ATP synthase subunit delta (178 aa).

It belongs to the ATPase delta chain family. F-type ATPases have 2 components, F(1) - the catalytic core - and F(0) - the membrane proton channel. F(1) has five subunits: alpha(3), beta(3), gamma(1), delta(1), epsilon(1). F(0) has three main subunits: a(1), b(2) and c(10-14). The alpha and beta chains form an alternating ring which encloses part of the gamma chain. F(1) is attached to F(0) by a central stalk formed by the gamma and epsilon chains, while a peripheral stalk is formed by the delta and b chains.

The protein resides in the cell inner membrane. In terms of biological role, f(1)F(0) ATP synthase produces ATP from ADP in the presence of a proton or sodium gradient. F-type ATPases consist of two structural domains, F(1) containing the extramembraneous catalytic core and F(0) containing the membrane proton channel, linked together by a central stalk and a peripheral stalk. During catalysis, ATP synthesis in the catalytic domain of F(1) is coupled via a rotary mechanism of the central stalk subunits to proton translocation. This protein is part of the stalk that links CF(0) to CF(1). It either transmits conformational changes from CF(0) to CF(1) or is implicated in proton conduction. The chain is ATP synthase subunit delta from Polynucleobacter necessarius subsp. necessarius (strain STIR1).